Consider the following 1958-residue polypeptide: Rho GTPase-activating protein 21 (1958 aa).

Residues methionine 1–threonine 42 form a disordered region. Positions aspartate 13–serine 32 are enriched in basic and acidic residues. Phosphoserine is present on residues serine 36 and serine 57. In terms of domain architecture, PDZ spans threonine 50–aspartate 159. 3 stretches are compositionally biased toward polar residues: residues serine 286–serine 295, serine 306–proline 325, and alanine 418–glutamine 436. Disordered stretches follow at residues serine 286–proline 325 and alanine 418–valine 458. Over residues proline 448–valine 458 the composition is skewed to low complexity. Serine 459 is modified (phosphoserine). Omega-N-methylarginine is present on residues arginine 554 and arginine 575. A phosphoserine mark is found at serine 612, serine 616, and serine 625. A compositionally biased stretch (polar residues) spans serine 659–glycine 687. The tract at residues serine 659 to leucine 751 is disordered. Serine 717 bears the Phosphoserine mark. Residues leucine 729 to proline 742 show a composition bias toward basic and acidic residues. At threonine 747 the chain carries Phosphothreonine. A phosphoserine mark is found at serine 857, serine 862, and serine 881. Residues aspartate 859–glycine 885 are disordered. Residues lysine 875–glycine 885 show a composition bias toward basic and acidic residues. Tyrosine 882 is subject to Phosphotyrosine. 5 positions are modified to phosphoserine: serine 924, serine 926, serine 954, serine 1099, and serine 1115. The interval serine 930–proline 1097 is interaction with ARF1 and ARF6. Residues aspartate 931–asparagine 1040 enclose the PH domain. Positions leucine 1086–lysine 1133 are disordered. The segment covering serine 1099–threonine 1122 has biased composition (basic and acidic residues). One can recognise a Rho-GAP domain in the interval valine 1147–phenylalanine 1339. 4 disordered regions span residues leucine 1348–lysine 1401, serine 1418–glutamate 1575, serine 1598–proline 1642, and arginine 1655–aspartate 1686. Positions threonine 1349–valine 1362 are enriched in polar residues. Over residues serine 1383–lysine 1401 the composition is skewed to low complexity. Phosphoserine is present on residues serine 1418, serine 1432, and serine 1433. 2 stretches are compositionally biased toward basic and acidic residues: residues phenylalanine 1441–glycine 1466 and asparagine 1477–leucine 1493. Lysine 1444 participates in a covalent cross-link: Glycyl lysine isopeptide (Lys-Gly) (interchain with G-Cter in SUMO). Position 1504 is a phosphoserine (serine 1504). At threonine 1516 the chain carries Phosphothreonine. Serine 1527 bears the Phosphoserine mark. Residues serine 1544–alanine 1559 are compositionally biased toward low complexity. Positions serine 1592–serine 1861 are interaction with CTNNA1. The segment covering arginine 1603–alanine 1612 has biased composition (polar residues). Residues serine 1624–glutamate 1634 are compositionally biased toward basic and acidic residues. A Phosphoserine modification is found at serine 1669. Residues glycine 1671–aspartate 1686 are compositionally biased toward polar residues. At threonine 1682 the chain carries Phosphothreonine. At serine 1742 the chain carries Phosphoserine. Positions threonine 1860–leucine 1958 are disordered. Positions glutamine 1874–proline 1909 are enriched in polar residues. The residue at position 1917 (serine 1917) is a Phosphoserine. Over residues proline 1918–lysine 1931 the composition is skewed to polar residues.

Interacts with GTP-bound ARF1 and ARF6. Interacts with CTNNA1. Sumoylated with SUMO2 and SUMO3 in proliferating lymphocytes. In terms of tissue distribution, widely expressed with higher expression in brain, heart, skeletal muscle and placenta.

It localises to the golgi apparatus membrane. It is found in the cell junction. The protein resides in the cytoplasmic vesicle membrane. Its subcellular location is the cytoplasm. The protein localises to the cytoskeleton. In terms of biological role, functions as a GTPase-activating protein (GAP) for RHOA and CDC42. Downstream partner of ARF1 which may control Golgi apparatus structure and function. Also required for CTNNA1 recruitment to adherens junctions. The polypeptide is Rho GTPase-activating protein 21 (ARHGAP21) (Homo sapiens (Human)).